Reading from the N-terminus, the 191-residue chain is Programmed cell death protein 6 (191 aa).

At alanine 2 the chain carries N-acetylalanine. EF-hand domains follow at residues 23-58 (PDQS…GTWT), 59-89 (PFNP…TGVW), 90-125 (KYIT…FGYR), 126-161 (LSDQ…LQRL), and 162-191 (TDIF…FSIV). Residues aspartate 36, aspartate 38, serine 40, valine 42, and glutamate 47 each contribute to the Ca(2+) site. Aspartate 103, aspartate 105, serine 107, methionine 109, and glutamate 114 together coordinate Ca(2+). Mg(2+) is bound by residues aspartate 169, aspartate 171, aspartate 173, and tryptophan 175.

As to quaternary structure, homodimer and heterodimer; heterodimerizes (via the EF-hand 5) with PEF1. Isoform 1 and isoform 2 self-associate; probably forming homodimers. Interacts with CPNE4 (via VWFA domain). Interacts with PDCD6IP; the interaction is calcium-dependent. Interacts with RBM22. Interacts with PLSCR4. Interacts with ANXA7 and TSG101. Interacts with DAPK1. Interacts with SEC31A; the interaction is calcium-dependent and promotes monoubiquitination of SEC31A. Interacts with ANXA11 (via N-terminus); the interaction is calcium-dependent. Interacts with PLSCR3 (via N-terminus); the interaction is calcium-dependent. Interacts with MCOLN1; the interaction is calcium-dependent. Interacts with KDR; the interaction is calcium-dependent. Interacts with HEBP2; the interaction is calcium-dependent. Interacts with TFG. Isoform 1: Interacts with SHISA5, leading to stabilize it. Isoform 2: Does not interact with SHISA5. Isoform 2: Does not interact with PDCD6IP, TSG101, ANXA7 and ANXA11.

It is found in the endoplasmic reticulum membrane. Its subcellular location is the cytoplasmic vesicle. The protein localises to the COPII-coated vesicle membrane. It localises to the cytoplasm. The protein resides in the nucleus. It is found in the endosome. Its function is as follows. Calcium sensor that plays a key role in processes such as endoplasmic reticulum (ER)-Golgi vesicular transport, endosomal biogenesis or membrane repair. Acts as an adapter that bridges unrelated proteins or stabilizes weak protein-protein complexes in response to calcium: calcium-binding triggers exposure of apolar surface, promoting interaction with different sets of proteins thanks to 3 different hydrophobic pockets, leading to translocation to membranes. Involved in ER-Golgi transport by promoting the association between PDCD6IP and TSG101, thereby bridging together the ESCRT-III and ESCRT-I complexes. Together with PEF1, acts as a calcium-dependent adapter for the BCR(KLHL12) complex, a complex involved in ER-Golgi transport by regulating the size of COPII coats. In response to cytosolic calcium increase, the heterodimer formed with PEF1 interacts with, and bridges together the BCR(KLHL12) complex and SEC31 (SEC31A or SEC31B), promoting monoubiquitination of SEC31 and subsequent collagen export, which is required for neural crest specification. Involved in the regulation of the distribution and function of MCOLN1 in the endosomal pathway. Promotes localization and polymerization of TFG at endoplasmic reticulum exit site. Required for T-cell receptor-, Fas-, and glucocorticoid-induced apoptosis. May mediate Ca(2+)-regulated signals along the death pathway: interaction with DAPK1 can accelerate apoptotic cell death by increasing caspase-3 activity. Its role in apoptosis may however be indirect, as suggested by knockout experiments. May inhibit KDR/VEGFR2-dependent angiogenesis; the function involves inhibition of VEGF-induced phosphorylation of the Akt signaling pathway. In case of infection by HIV-1 virus, indirectly inhibits HIV-1 production by affecting viral Gag expression and distribution. Functionally, has a lower Ca(2+) affinity than isoform 1. This chain is Programmed cell death protein 6 (PDCD6), found in Homo sapiens (Human).